A 781-amino-acid chain; its full sequence is Penicillin-binding protein 1B (781 aa).

The interval 151–322 is transglycosylase; sequence FRLAPKLIAM…SLYNPWRNPQ (172 aa). Catalysis depends on glutamate 188, which acts as the Proton donor; for transglycosylase activity. A transpeptidase region spans residues 415 to 702; it reads SQLQLKMKNP…ALQIYKDYLN (288 aa). Serine 466 serves as the catalytic Acyl-ester intermediate; for transpeptidase activity. Residues 749–768 show a composition bias toward low complexity; that stretch reads ETSSPSLTPTTETETPPQES. The tract at residues 749–781 is disordered; that stretch reads ETSSPSLTPTTETETPPQESLWDVLDNPNPPAQ.

In the N-terminal section; belongs to the glycosyltransferase 51 family. It in the C-terminal section; belongs to the transpeptidase family.

The protein localises to the cell inner membrane. It carries out the reaction [GlcNAc-(1-&gt;4)-Mur2Ac(oyl-L-Ala-gamma-D-Glu-L-Lys-D-Ala-D-Ala)](n)-di-trans,octa-cis-undecaprenyl diphosphate + beta-D-GlcNAc-(1-&gt;4)-Mur2Ac(oyl-L-Ala-gamma-D-Glu-L-Lys-D-Ala-D-Ala)-di-trans,octa-cis-undecaprenyl diphosphate = [GlcNAc-(1-&gt;4)-Mur2Ac(oyl-L-Ala-gamma-D-Glu-L-Lys-D-Ala-D-Ala)](n+1)-di-trans,octa-cis-undecaprenyl diphosphate + di-trans,octa-cis-undecaprenyl diphosphate + H(+). It catalyses the reaction Preferential cleavage: (Ac)2-L-Lys-D-Ala-|-D-Ala. Also transpeptidation of peptidyl-alanyl moieties that are N-acyl substituents of D-alanine.. It functions in the pathway cell wall biogenesis; peptidoglycan biosynthesis. Functionally, cell wall formation. Synthesis of cross-linked peptidoglycan from the lipid intermediates. The enzyme has a penicillin-insensitive transglycosylase N-terminal domain (formation of linear glycan strands) and a penicillin-sensitive transpeptidase C-terminal domain (cross-linking of the peptide subunits). The chain is Penicillin-binding protein 1B (mrcB) from Haemophilus influenzae (strain ATCC 51907 / DSM 11121 / KW20 / Rd).